Here is a 136-residue protein sequence, read N- to C-terminus: Large ribosomal subunit protein bL21 (136 aa).

The interval arginine 107 to glutamate 136 is disordered. The span at alanine 121 to glutamate 136 shows a compositional bias: low complexity.

This sequence belongs to the bacterial ribosomal protein bL21 family. Part of the 50S ribosomal subunit. Contacts protein L20.

This protein binds to 23S rRNA in the presence of protein L20. This chain is Large ribosomal subunit protein bL21, found in Acidothermus cellulolyticus (strain ATCC 43068 / DSM 8971 / 11B).